A 700-amino-acid chain; its full sequence is Protein kinase C, eye isozyme (700 aa).

2 Phorbol-ester/DAG-type zinc fingers span residues 71–121 (GHRF…VFKC) and 136–186 (KHGW…PPMC). In terms of domain architecture, C2 spans 189–310 (DISEVRGKLL…LQKEPVDGWY (122 aa)). The Ca(2+) site is built by aspartate 222, aspartate 228, aspartate 281, aspartate 283, serine 286, and aspartate 289. The region spanning 371–629 (FNFVKVIGKG…RQEITTHPFF (259 aa)) is the Protein kinase domain. ATP is bound by residues 377–385 (IGKGSFGKV) and lysine 400. Aspartate 495 (proton acceptor) is an active-site residue. The region spanning 630–700 (RNVDWDKAEA…FMNPEFITII (71 aa)) is the AGC-kinase C-terminal domain.

Belongs to the protein kinase superfamily. AGC Ser/Thr protein kinase family. PKC subfamily. Ca(2+) is required as a cofactor. In terms of tissue distribution, exclusively expressed in photoreceptor cells.

The enzyme catalyses L-seryl-[protein] + ATP = O-phospho-L-seryl-[protein] + ADP + H(+). The catalysed reaction is L-threonyl-[protein] + ATP = O-phospho-L-threonyl-[protein] + ADP + H(+). This is a calcium-activated, phospholipid-dependent, serine- and threonine-specific enzyme. This isozyme is a negative regulator of the visual transduction cascade and has been shown to be required for photoreceptor cell inactivation and light adaptation. Negative regulation is dependent on interaction with scaffolding protein inaD. Acts in a hh-signaling pathway which regulates the Duox-dependent gut immune response to bacterial uracil; required for the activation of Cad99C and consequently Cad99C-dependent endosome formation, which is essential for the Duox-dependent production of reactive oxygen species (ROS) in response to intestinal bacterial infection. The chain is Protein kinase C, eye isozyme (inaC) from Drosophila melanogaster (Fruit fly).